Consider the following 217-residue polypeptide: 7-cyano-7-deazaguanine synthase (217 aa).

10–20 (FSGGQDSTTCL) is a binding site for ATP. Zn(2+) contacts are provided by C185, C194, C197, and C200.

Belongs to the QueC family. As to quaternary structure, homodimer. Requires Zn(2+) as cofactor.

It catalyses the reaction 7-carboxy-7-deazaguanine + NH4(+) + ATP = 7-cyano-7-deazaguanine + ADP + phosphate + H2O + H(+). The protein operates within purine metabolism; 7-cyano-7-deazaguanine biosynthesis. Functionally, catalyzes the ATP-dependent conversion of 7-carboxy-7-deazaguanine (CDG) to 7-cyano-7-deazaguanine (preQ(0)). This Streptococcus thermophilus (strain CNRZ 1066) protein is 7-cyano-7-deazaguanine synthase.